Here is a 497-residue protein sequence, read N- to C-terminus: Uridine 5'-monophosphate synthase (497 aa).

Positions 8–226 (TRNGALKRNL…KLEINSELEN (219 aa)) are OPRTase. The interval 227–232 (LSSLPY) is domain linker. The tract at residues 233–496 (VENVRTPLAE…WDALTRSDDS (264 aa)) is OMPdecase. UMP is bound by residues D271 and 293–295 (KLH). K293 is an orotidine 5'-phosphate binding site. Active-site for OMPdecase activity residues include D324, K326, and D329. Orotidine 5'-phosphate-binding positions include K326, D329, T333, S387, 446 to 448 (QQW), and 466 to 467 (GR). UMP contacts are provided by residues D329, T333, S387, 446–448 (QQW), and 466–467 (GR).

In the N-terminal section; belongs to the purine/pyrimidine phosphoribosyltransferase family. It in the C-terminal section; belongs to the OMP decarboxylase family. As to expression, expressed in intestine and in neurons near the nerve ring and rectum.

Its subcellular location is the cytoplasm. The enzyme catalyses orotidine 5'-phosphate + diphosphate = orotate + 5-phospho-alpha-D-ribose 1-diphosphate. It catalyses the reaction orotidine 5'-phosphate + H(+) = UMP + CO2. Its pathway is pyrimidine metabolism; UMP biosynthesis via de novo pathway; UMP from orotate: step 1/2. It functions in the pathway pyrimidine metabolism; UMP biosynthesis via de novo pathway; UMP from orotate: step 2/2. Bifunctional enzyme which catalyzes the formation of UMP from orotate in the de novo pathway of pyrimidine biosynthesis. May also form UMP from uracil. Regulates the size of gut granules during embryonic development. Involved in resistance to DNA damaging agents including UV-C and X-ray radiation. The chain is Uridine 5'-monophosphate synthase from Caenorhabditis elegans.